The following is a 514-amino-acid chain: ATP synthase subunit alpha (514 aa).

170–177 (GDRQIGKT) lines the ATP pocket.

It belongs to the ATPase alpha/beta chains family. As to quaternary structure, F-type ATPases have 2 components, CF(1) - the catalytic core - and CF(0) - the membrane proton channel. CF(1) has five subunits: alpha(3), beta(3), gamma(1), delta(1), epsilon(1). CF(0) has three main subunits: a(1), b(2) and c(9-12). The alpha and beta chains form an alternating ring which encloses part of the gamma chain. CF(1) is attached to CF(0) by a central stalk formed by the gamma and epsilon chains, while a peripheral stalk is formed by the delta and b chains.

It is found in the cell inner membrane. It catalyses the reaction ATP + H2O + 4 H(+)(in) = ADP + phosphate + 5 H(+)(out). In terms of biological role, produces ATP from ADP in the presence of a proton gradient across the membrane. The alpha chain is a regulatory subunit. The protein is ATP synthase subunit alpha of Alcanivorax borkumensis (strain ATCC 700651 / DSM 11573 / NCIMB 13689 / SK2).